Here is a 1244-residue protein sequence, read N- to C-terminus: Mitotic chromosome and X-chromosome-associated protein mix-1 (1244 aa).

32 to 39 lines the ATP pocket; sequence GYNGSGKS. Positions 247-355 form a coiled coil; the sequence is VKKSAKEIED…AKRKEHEDSK (109 aa). Residues 337 to 355 show a composition bias toward basic and acidic residues; sequence LSKDREVLDAKRKEHEDSK. Residues 337–369 form a disordered region; it reads LSKDREVLDAKRKEHEDSKAANSKDIQSQSDDE. Residues 356–365 show a composition bias toward polar residues; the sequence is AANSKDIQSQ. Residues 415 to 472 adopt a coiled-coil conformation; the sequence is ITAAKKRGERLHNQIKHLEGEKATLSARSKSDIGSADNYQKEVDEINKQLQLLGFNID. An SMC hinge domain is found at 526 to 654; it reads DVFGYVAHLI…DSLDVAREIA (129 aa). Coiled coils occupy residues 701–946 and 975–1037; these read PQIE…RKEA and YTVS…IATL. The span at 919-932 shows a compositional bias: basic and acidic residues; the sequence is AKTKSKREEKEKEL. The interval 919-943 is disordered; that stretch reads AKTKSKREEKEKELTSLQQSEASNR. Positions 1216–1232 are enriched in basic and acidic residues; the sequence is DAAAKKGAQKNDKEPPK. Positions 1216–1244 are disordered; the sequence is DAAAKKGAQKNDKEPPKKKPIVVDDDDFE.

It belongs to the SMC family. SMC2 subfamily. Component of the condensin I complex, which contains the mix-1/SMC2 and smc-4/SMC4 heterodimer, and three non SMC subunits that probably regulate the complex: dpy-26, capg-1 and dpy-28. Within the complex, interacts with smc-4, dpy-26, dpy-28 and capg-1. Interaction with smc-4 is required for mitotic chromosome localization. Component of the condensin II complex, which contains the mix-1/SMC2 and smc-4/SMC4 heterodimer, and three non SMC subunits, capg-2, kle-2 and hcp-6 that probably regulate the complex. Within the complex, interacts with smc-4, capg-2, kle-2 and hcp-6. Also a component of the condensin-like dosage compensation complex, which contains the mix-1/SMC2 and dpy-27/SMC4 heterodimer, and three non SMC subunits that probably regulate the complex: dpy-26, capg-1 and dpy-28. Within the complex, interacts with dpy-27, dpy-26, capg-1 and dpy-28. Requires capg-1 for hermaphrodite X chromosome localization. Interacts with smcl-1. As to expression, expressed in embryos and in adult somatic and germline tissues (at protein level).

The protein resides in the nucleus. The protein localises to the chromosome. Essential protein required for both chromosome condensation and segregation and X-chromosome dosage compensation depending on its binding partners. Central component of the condensin I complex, a complex required for conversion of interphase chromatin into mitotic-like condense chromosomes. The condensin complex introduces positive supercoils into relaxed DNA in the presence of type I topoisomerases. Converts nicked DNA into positive knotted forms in the presence of type II topoisomerases. Central component of the condensin II complex, a complex that seems to play a role in prophase chromosome condensation and organization. Both the condensin complex I and II play a role in meiotic and mitotic chromosome segregation. Plays a role in robust cytokinesis upon the presence of chromatin obstructions. Also a member of the condensin I-like dosage compensation complex that associates specifically with hermaphrodite X chromosomes to reduce their gene transcription during interphase. The protein is Mitotic chromosome and X-chromosome-associated protein mix-1 (mix-1) of Caenorhabditis elegans.